The following is a 775-amino-acid chain: Phosphoribosylformylglycinamidine synthase subunit PurL (775 aa).

Histidine 81 is an active-site residue. Positions 84 and 123 each coordinate ATP. Position 125 (glutamate 125) interacts with Mg(2+). Substrate-binding positions include 126–129 (SHNH) and arginine 148. The active-site Proton acceptor is the histidine 127. Mg(2+) is bound at residue aspartate 149. Substrate is bound at residue glutamine 272. Position 300 (aspartate 300) interacts with Mg(2+). Residue 344–346 (ESQ) coordinates substrate. Aspartate 525 and glycine 562 together coordinate ATP. Residue asparagine 563 coordinates Mg(2+). Serine 565 provides a ligand contact to substrate.

Belongs to the FGAMS family. Monomer. Part of the FGAM synthase complex composed of 1 PurL, 1 PurQ and 2 PurS subunits.

The protein localises to the cytoplasm. The catalysed reaction is N(2)-formyl-N(1)-(5-phospho-beta-D-ribosyl)glycinamide + L-glutamine + ATP + H2O = 2-formamido-N(1)-(5-O-phospho-beta-D-ribosyl)acetamidine + L-glutamate + ADP + phosphate + H(+). Its pathway is purine metabolism; IMP biosynthesis via de novo pathway; 5-amino-1-(5-phospho-D-ribosyl)imidazole from N(2)-formyl-N(1)-(5-phospho-D-ribosyl)glycinamide: step 1/2. Its function is as follows. Part of the phosphoribosylformylglycinamidine synthase complex involved in the purines biosynthetic pathway. Catalyzes the ATP-dependent conversion of formylglycinamide ribonucleotide (FGAR) and glutamine to yield formylglycinamidine ribonucleotide (FGAM) and glutamate. The FGAM synthase complex is composed of three subunits. PurQ produces an ammonia molecule by converting glutamine to glutamate. PurL transfers the ammonia molecule to FGAR to form FGAM in an ATP-dependent manner. PurS interacts with PurQ and PurL and is thought to assist in the transfer of the ammonia molecule from PurQ to PurL. This is Phosphoribosylformylglycinamidine synthase subunit PurL from Agrobacterium fabrum (strain C58 / ATCC 33970) (Agrobacterium tumefaciens (strain C58)).